The following is a 266-amino-acid chain: Methyl-coenzyme M reductase II subunit gamma (266 aa).

Coenzyme M is bound at residue Arg123.

This sequence belongs to the methyl-coenzyme M reductase gamma subunit family. MCR is a hexamer of two alpha, two beta, and two gamma chains, forming a dimer of heterotrimers. Requires coenzyme F430 as cofactor.

The enzyme catalyses coenzyme B + methyl-coenzyme M = methane + coenzyme M-coenzyme B heterodisulfide. It functions in the pathway one-carbon metabolism; methyl-coenzyme M reduction; methane from methyl-coenzyme M: step 1/1. Functionally, component of the methyl-coenzyme M reductase (MCR) I that catalyzes the reductive cleavage of methyl-coenzyme M (CoM-S-CH3 or 2-(methylthio)ethanesulfonate) using coenzyme B (CoB or 7-mercaptoheptanoylthreonine phosphate) as reductant which results in the production of methane and the mixed heterodisulfide of CoB and CoM (CoM-S-S-CoB). This is the final step in methanogenesis. This chain is Methyl-coenzyme M reductase II subunit gamma (mrtG), found in Methanocaldococcus jannaschii (strain ATCC 43067 / DSM 2661 / JAL-1 / JCM 10045 / NBRC 100440) (Methanococcus jannaschii).